The primary structure comprises 374 residues: Putative 2,3-diketo-5-methylthiopentyl-1-phosphate enolase (374 aa).

Residues Lys138, 164-167 (QDDE), His255, Gly327, and 349-350 (GG) contribute to the substrate site. Asp166 is a binding site for Mg(2+).

This sequence belongs to the RuBisCO large chain family. Type IV subfamily. Homodimer. Requires Mg(2+) as cofactor.

It catalyses the reaction 5-methylsulfanyl-2,3-dioxopentyl phosphate = 2-hydroxy-5-methylsulfanyl-3-oxopent-1-enyl phosphate. It functions in the pathway amino-acid biosynthesis; L-methionine biosynthesis via salvage pathway; L-methionine from S-methyl-5-thio-alpha-D-ribose 1-phosphate: step 3/6. Functionally, catalyzes the enolization of 2,3-diketo-5-methylthiopentyl-1-phosphate (DK-MTP-1-P) into 2-hydroxy-3-keto-5-methylthiopentenyl-1-phosphate (HK-MTPenyl-1-P). In Shouchella clausii (strain KSM-K16) (Alkalihalobacillus clausii), this protein is Putative 2,3-diketo-5-methylthiopentyl-1-phosphate enolase (mtnW).